The chain runs to 389 residues: Lipid-A-disaccharide synthase (389 aa).

This sequence belongs to the LpxB family.

It catalyses the reaction a lipid X + a UDP-2-N,3-O-bis[(3R)-3-hydroxyacyl]-alpha-D-glucosamine = a lipid A disaccharide + UDP + H(+). The protein operates within bacterial outer membrane biogenesis; LPS lipid A biosynthesis. Functionally, condensation of UDP-2,3-diacylglucosamine and 2,3-diacylglucosamine-1-phosphate to form lipid A disaccharide, a precursor of lipid A, a phosphorylated glycolipid that anchors the lipopolysaccharide to the outer membrane of the cell. In Paraburkholderia xenovorans (strain LB400), this protein is Lipid-A-disaccharide synthase.